The primary structure comprises 204 residues: dITP/XTP pyrophosphatase (204 aa).

8 to 13 (SNNAHK) contributes to the substrate binding site. Residues Glu41 and Asp76 each contribute to the Mg(2+) site. The active-site Proton acceptor is the Asp76. Residues Ser77, 159-162 (FGYD), Lys182, and 187-188 (HR) contribute to the substrate site.

This sequence belongs to the HAM1 NTPase family. In terms of assembly, homodimer. Requires Mg(2+) as cofactor.

It carries out the reaction XTP + H2O = XMP + diphosphate + H(+). It catalyses the reaction dITP + H2O = dIMP + diphosphate + H(+). The enzyme catalyses ITP + H2O = IMP + diphosphate + H(+). Its function is as follows. Pyrophosphatase that catalyzes the hydrolysis of nucleoside triphosphates to their monophosphate derivatives, with a high preference for the non-canonical purine nucleotides XTP (xanthosine triphosphate), dITP (deoxyinosine triphosphate) and ITP. Seems to function as a house-cleaning enzyme that removes non-canonical purine nucleotides from the nucleotide pool, thus preventing their incorporation into DNA/RNA and avoiding chromosomal lesions. The sequence is that of dITP/XTP pyrophosphatase from Clostridium perfringens (strain 13 / Type A).